The sequence spans 716 residues: ATP-dependent DNA helicase DinG (716 aa).

The region spanning 17–294 (ALQEQIPDFI…TCMEQFRPKT (278 aa)) is the Helicase ATP-binding domain. Residue 54–61 (APTGVGKT) participates in ATP binding. Residue C120 participates in [4Fe-4S] cluster binding. Residues 131 to 134 (EPTQ) carry the DEAH box motif. [4Fe-4S] cluster is bound by residues C194, C199, and C205. Residues 248 to 251 (DEGH) carry the DEAH box motif. In terms of domain architecture, Helicase C-terminal spans 517–698 (HIAEMAAFFR…VFPIEQPEVP (182 aa)).

It belongs to the helicase family. DinG subfamily. Type 1 sub-subfamily. It depends on [4Fe-4S] cluster as a cofactor.

The catalysed reaction is Couples ATP hydrolysis with the unwinding of duplex DNA at the replication fork by translocating in the 5'-3' direction. This creates two antiparallel DNA single strands (ssDNA). The leading ssDNA polymer is the template for DNA polymerase III holoenzyme which synthesizes a continuous strand.. It catalyses the reaction ATP + H2O = ADP + phosphate + H(+). Functionally, DNA-dependent ATPase and 5'-3' DNA helicase. Unwinds D-loops, R-loops, forked DNA and G-quadruplex DNA. This is ATP-dependent DNA helicase DinG from Escherichia coli O6:H1 (strain CFT073 / ATCC 700928 / UPEC).